A 319-amino-acid chain; its full sequence is Ankyrin repeat domain-containing protein 1 (319 aa).

The stretch at 61–89 forms a coiled coil; it reads KTEKQREAELKKKKLEQRSKLENLEDLEI. ANK repeat units lie at residues 152 to 181, 185 to 214, 218 to 247, 251 to 280, and 284 to 315; these read YKRT…QIEF, LEST…KISA, LLST…DLNA, EGDT…DLNV, and AGKT…KASR.

As to quaternary structure, interacts with TTN/titin and YBX1.

It localises to the nucleus. In terms of biological role, may play an important role in endothelial cell activation. May act as a nuclear transcription factor that negatively regulates the expression of cardiac genes. This Bos taurus (Bovine) protein is Ankyrin repeat domain-containing protein 1 (ANKRD1).